A 398-amino-acid chain; its full sequence is MAYNHFSIPKNIEEKENSFFDVTFQDEPDETTSTATGIAKVSIPTPKPSTPLSTLTNGSTIQQSMTNQPEPTSQVPPISAKPPMDDATYATQQLTLRALLSTREAGIIIGKAGKNVAELRSTTNVKAGVTKAVPNVHDRVLTISGPLENVVRAYRFIIDIFAKNSTNPDGTPSDANTPRKLRLLIAHSLMGSIIGRNGLRIKLIQDKCSCRMIASKDMLPQSTERTVEIHGTVDNLHAAIWEIGKCLIDDWERGAGTVFYNPVSRLTQPLPSLASTASPQQVSPPAAPSTTSGEAIPENFVSYGAQVFPATQMPFLQQPKVTQNISIPADMVGCIIGRGGSKISEIRRTSGSKISIAKEPHDETGERMFTITGTHEENEKALFLLYQQLEMEKDRRSH.

Residues 40–78 form a disordered region; sequence KVSIPTPKPSTPLSTLTNGSTIQQSMTNQPEPTSQVPPI. The residue at position 50 (Thr50) is a Phosphothreonine. The segment covering 57–76 has biased composition (polar residues); it reads NGSTIQQSMTNQPEPTSQVP. KH domains follow at residues 93-157 and 178-243; these read QLTL…YRFI and PRKL…IWEI. Low complexity predominate over residues 274–290; that stretch reads ASTASPQQVSPPAAPST. The segment at 274–295 is disordered; that stretch reads ASTASPQQVSPPAAPSTTSGEA. Positions 320–385 constitute a KH 3 domain; that stretch reads KVTQNISIPA…EENEKALFLL (66 aa).

In terms of processing, phosphorylated by pmk1. Phosphorylation causes enhancement of the RNA-binding activity.

It localises to the cytoplasm. Binds and stabilizes pmp1 mRNA and hence acts as a negative regulator of pmk1 signaling. Overexpression suppresses the Cl(-) sensitivity of calcineurin deletion. This chain is RNA-binding protein rnc1, found in Schizosaccharomyces pombe (strain 972 / ATCC 24843) (Fission yeast).